Consider the following 489-residue polypeptide: Alpha-amylase (489 aa).

The N-terminal stretch at 1-16 (HFKPILVLCLATLALG) is a signal peptide. An intrachain disulfide couples Cys44 to Cys102. Asn116, Arg164, and Asp173 together coordinate Ca(2+). Cys152 and Cys166 are joined by a disulfide. Arg201 is a binding site for chloride. Asp203 functions as the Nucleophile in the catalytic mechanism. A Ca(2+)-binding site is contributed by His207. The active-site Proton donor is the Glu240. Positions 303 and 339 each coordinate chloride. 2 cysteine pairs are disulfide-bonded: Cys372-Cys378 and Cys443-Cys455.

The protein belongs to the glycosyl hydrolase 13 family. In terms of assembly, monomer. The cofactor is Ca(2+). It depends on chloride as a cofactor.

The enzyme catalyses Endohydrolysis of (1-&gt;4)-alpha-D-glucosidic linkages in polysaccharides containing three or more (1-&gt;4)-alpha-linked D-glucose units.. The polypeptide is Alpha-amylase (Tribolium castaneum (Red flour beetle)).